The chain runs to 226 residues: Cytidylate kinase (226 aa).

10–18 contributes to the ATP binding site; that stretch reads GPAGAGKST.

Belongs to the cytidylate kinase family. Type 1 subfamily.

It localises to the cytoplasm. It catalyses the reaction CMP + ATP = CDP + ADP. The enzyme catalyses dCMP + ATP = dCDP + ADP. The polypeptide is Cytidylate kinase (Caldicellulosiruptor bescii (strain ATCC BAA-1888 / DSM 6725 / KCTC 15123 / Z-1320) (Anaerocellum thermophilum)).